The sequence spans 195 residues: Imidazoleglycerol-phosphate dehydratase (195 aa).

Belongs to the imidazoleglycerol-phosphate dehydratase family.

The protein localises to the cytoplasm. It carries out the reaction D-erythro-1-(imidazol-4-yl)glycerol 3-phosphate = 3-(imidazol-4-yl)-2-oxopropyl phosphate + H2O. Its pathway is amino-acid biosynthesis; L-histidine biosynthesis; L-histidine from 5-phospho-alpha-D-ribose 1-diphosphate: step 6/9. The polypeptide is Imidazoleglycerol-phosphate dehydratase (Trichlorobacter lovleyi (strain ATCC BAA-1151 / DSM 17278 / SZ) (Geobacter lovleyi)).